We begin with the raw amino-acid sequence, 277 residues long: S-formylglutathione hydrolase FrmB (277 aa).

Catalysis depends on charge relay system residues S145, D221, and H254.

The protein belongs to the esterase D family.

It carries out the reaction S-formylglutathione + H2O = formate + glutathione + H(+). Functionally, serine hydrolase involved in the detoxification of formaldehyde. Hydrolyzes S-formylglutathione to glutathione and formate. This chain is S-formylglutathione hydrolase FrmB (frmB), found in Escherichia coli (strain K12 / DH10B).